Here is a 389-residue protein sequence, read N- to C-terminus: Cytochrome B translational activator CBS2 (389 aa).

The protein resides in the mitochondrion. Functionally, translational activator of cytochrome b. The cytochrome b (coB) leader RNA may represent the target sequence for CBS1 and/ or CBS2. The sequence is that of Cytochrome B translational activator CBS2 (CBS2) from Saccharomyces cerevisiae (strain ATCC 204508 / S288c) (Baker's yeast).